We begin with the raw amino-acid sequence, 225 residues long: Glutathione S-transferase U2 (225 aa).

The GST N-terminal domain maps to 6-85 (ESVKLLGFWI…YIDQTWNNNP (80 aa)). Residues 16 to 17 (SP), 42 to 43 (KK), 56 to 57 (KV), and 69 to 70 (ES) each bind glutathione. A GST C-terminal domain is found at 90–217 (DPYEKAMVRF…EKHIERMKKI (128 aa)). Residue threonine 151 is modified to Phosphothreonine.

This sequence belongs to the GST superfamily. Tau family.

Its subcellular location is the cytoplasm. The protein resides in the cytosol. The catalysed reaction is RX + glutathione = an S-substituted glutathione + a halide anion + H(+). Its function is as follows. May be involved in the conjugation of reduced glutathione to a wide number of exogenous and endogenous hydrophobic electrophiles and have a detoxification role against certain herbicides. In Arabidopsis thaliana (Mouse-ear cress), this protein is Glutathione S-transferase U2 (GSTU2).